Here is a 241-residue protein sequence, read N- to C-terminus: Phosphoribosylaminoimidazole-succinocarboxamide synthase (241 aa).

It belongs to the SAICAR synthetase family.

The catalysed reaction is 5-amino-1-(5-phospho-D-ribosyl)imidazole-4-carboxylate + L-aspartate + ATP = (2S)-2-[5-amino-1-(5-phospho-beta-D-ribosyl)imidazole-4-carboxamido]succinate + ADP + phosphate + 2 H(+). Its pathway is purine metabolism; IMP biosynthesis via de novo pathway; 5-amino-1-(5-phospho-D-ribosyl)imidazole-4-carboxamide from 5-amino-1-(5-phospho-D-ribosyl)imidazole-4-carboxylate: step 1/2. This Caldivirga maquilingensis (strain ATCC 700844 / DSM 13496 / JCM 10307 / IC-167) protein is Phosphoribosylaminoimidazole-succinocarboxamide synthase.